A 704-amino-acid polypeptide reads, in one-letter code: Elongation factor G 1 (704 aa).

The 283-residue stretch at 8-290 (ERYRNIGICA…CVVEYMPAPT (283 aa)) folds into the tr-type G domain. GTP contacts are provided by residues 17–24 (AHVDAGKT), 88–92 (DTPGH), and 142–145 (NKMD).

It belongs to the TRAFAC class translation factor GTPase superfamily. Classic translation factor GTPase family. EF-G/EF-2 subfamily.

It localises to the cytoplasm. Functionally, catalyzes the GTP-dependent ribosomal translocation step during translation elongation. During this step, the ribosome changes from the pre-translocational (PRE) to the post-translocational (POST) state as the newly formed A-site-bound peptidyl-tRNA and P-site-bound deacylated tRNA move to the P and E sites, respectively. Catalyzes the coordinated movement of the two tRNA molecules, the mRNA and conformational changes in the ribosome. This chain is Elongation factor G 1, found in Pseudoalteromonas translucida (strain TAC 125).